A 341-amino-acid polypeptide reads, in one-letter code: Radial spoke head 14 homolog (341 aa).

ARM repeat units lie at residues 16-55, 57-96, 99-138, 139-178, 180-217, 219-258, 260-300, and 302-339; these read PTKAAIAYGCRALSKLNEELQSRDLLTRQKALVALCDLMH, PEYVYEAINIGCLESLKTLLQDDDNLVRIKTTEVLYIMAT, VGRVGFLKHDIIQALSLLLSDHQTLCRENLHQAYKHLAQL, PKGAQGIVQSGLIPSLVRKLQKEEDHIQEIILDTLALCLQ, DATEALESQAVPCLKEKLLSQNSEIRSKAARALIAISI, LDGKNQVWKNKVIPILVTLLSDTDEEVKANAAGALMHATV, TEGK…MLAE, and PEGRKLLLSHVPIFRYLLAHKNEAIQRAAEVAIKVIEW.

Belongs to the flagellar radial spoke RSP14 family. Component of the axonemal radial spoke complex 1 (RS1), at least composed of spoke head proteins RSPH1, RSPH3, RSPH9 and the cilia-specific component RSPH4A or sperm-specific component RSPH6A, spoke stalk proteins RSPH14, DNAJB13, DYDC1, ROPN1L and NME5, and the anchor protein IQUB.

The protein localises to the cytoplasm. The protein resides in the cytoskeleton. It is found in the flagellum axoneme. In terms of biological role, functions as part of axonemal radial spoke complexes that play an important part in the motility of sperm and cilia. The chain is Radial spoke head 14 homolog from Mus musculus (Mouse).